The primary structure comprises 447 residues: Tubulin beta-1 chain (447 aa).

Gln11, Glu69, Ser138, Gly142, Thr143, Gly144, Asn204, and Asn226 together coordinate GTP. Glu69 contacts Mg(2+). A disordered region spans residues 428–447; it reads ATADEDAEFDEEQEQEIEDN. Acidic residues predominate over residues 429–447; that stretch reads TADEDAEFDEEQEQEIEDN.

This sequence belongs to the tubulin family. Dimer of alpha and beta chains. A typical microtubule is a hollow water-filled tube with an outer diameter of 25 nm and an inner diameter of 15 nM. Alpha-beta heterodimers associate head-to-tail to form protofilaments running lengthwise along the microtubule wall with the beta-tubulin subunit facing the microtubule plus end conferring a structural polarity. Microtubules usually have 13 protofilaments but different protofilament numbers can be found in some organisms and specialized cells. The cofactor is Mg(2+).

Its subcellular location is the cytoplasm. The protein resides in the cytoskeleton. Functionally, tubulin is the major constituent of microtubules, a cylinder consisting of laterally associated linear protofilaments composed of alpha- and beta-tubulin heterodimers. Microtubules grow by the addition of GTP-tubulin dimers to the microtubule end, where a stabilizing cap forms. Below the cap, tubulin dimers are in GDP-bound state, owing to GTPase activity of alpha-tubulin. This chain is Tubulin beta-1 chain, found in Manduca sexta (Tobacco hawkmoth).